The primary structure comprises 355 residues: Heavy metal-associated isoprenylated plant protein 7 (355 aa).

Residues 1-58 (MGEEEKKPEAAEEKKMEEKKPEEKKEGEDKKVDAEKKGEDSDKKPQEGESNKDSKEDS) are compositionally biased toward basic and acidic residues. Positions 1–74 (MGEEEKKPEA…APAPPPPPQE (74 aa)) are disordered. Residues 63–73 (PEAPAPPPPPQ) are compositionally biased toward pro residues. 2 consecutive HMA domains span residues 72–136 (PQEV…HRQV) and 170–234 (VVTV…KHAA). A metal cation contacts are provided by C83 and C86. Residues 132 to 157 (THRQVQLLSPIPPPPPPPEKKAEEDK) form a disordered region. 2 residues coordinate a metal cation: C181 and C184. A disordered region spans residues 235 to 308 (IMKIDPPPPP…GGGEEEGKVV (74 aa)). Positions 254 to 293 (EGEKKEEEKGEGESKGEEGKDDKAKTDEEKKEGDGGKGEG) are enriched in basic and acidic residues. C352 is modified (cysteine methyl ester). C352 carries the S-farnesyl cysteine lipid modification. Residues 353–355 (TVM) constitute a propeptide, removed in mature form.

It belongs to the HIPP family. Post-translationally, efficiently farnesylated in vitro.

Functionally, heavy-metal-binding protein. Binds zinc, copper and nickel in a reversible manner. The chain is Heavy metal-associated isoprenylated plant protein 7 from Arabidopsis thaliana (Mouse-ear cress).